A 78-amino-acid chain; its full sequence is Defensin beta 136 (78 aa).

Positions 1-21 are cleaved as a signal peptide; it reads MNLCLSSLLFFLVILLPSGKG. 3 disulfide bridges follow: Cys-33–Cys-60, Cys-40–Cys-54, and Cys-44–Cys-61.

The protein belongs to the beta-defensin family.

The protein resides in the secreted. Host defense peptide that exhibits antimicrobial and antifungal activity. Exhibits antimicrobial activity against E.coli, S.aureus and C.albicans (in vitro). Has high lipopolysaccharide (LPS)-binding affinity, and may thereby be involved in immunoregulation through LPS neutralization. The polypeptide is Defensin beta 136 (DEFB136) (Pan troglodytes (Chimpanzee)).